We begin with the raw amino-acid sequence, 260 residues long: Histidine-binding periplasmic protein (260 aa).

An N-terminal signal peptide occupies residues 1 to 22 (MKKLALSLSLVLAFSSATAAFA). C60 and C67 are joined by a disulfide. Positions 91, 92, 94, 99, 143, and 183 each coordinate L-histidine.

It belongs to the bacterial solute-binding protein 3 family. As to quaternary structure, the complex is composed of two ATP-binding proteins (HisP), two transmembrane proteins (HisM and HisQ) and a solute-binding protein (HisJ).

It localises to the periplasm. Functionally, part of the ABC transporter complex HisPMQJ involved in histidine transport. Binds histidine. Interacts with HisQMP and stimulates ATPase activity of HisP, which results in histidine translocation. May have some additional function(s) in translocation that is independent of the stimulation of ATP hydrolysis. This is Histidine-binding periplasmic protein from Salmonella typhimurium (strain LT2 / SGSC1412 / ATCC 700720).